Consider the following 61-residue polypeptide: Ubiquinol-cytochrome c reductase complex assembly factor 6 (61 aa).

Residues 1–9 (MPAGVSWGQ) are Mitochondrial matrix-facing. A helical transmembrane segment spans residues 10–32 (YLKFLGCALASMMAGSQAVHLYY). The Mitochondrial intermembrane portion of the chain corresponds to 33–61 (KPLEDLRVYIEQEQHSTQVDPTAKPPESA).

This sequence belongs to the UQCC6 family. In terms of assembly, interacts with sloth1; the interaction stabilizes both components. As to expression, expressed in the brain.

The protein resides in the mitochondrion inner membrane. Its subcellular location is the mitochondrion. Required for the assembly and stability of the mitochondrial ubiquinol-cytochrome c reductase complex (complex III (CIII) or cytochrome b-c1 complex), a multisubunit transmembrane complex that is part of the mitochondrial electron transport chain (ETC) which drives oxidative phosphorylation. This chain is Ubiquinol-cytochrome c reductase complex assembly factor 6, found in Drosophila melanogaster (Fruit fly).